A 757-amino-acid chain; its full sequence is Kin of IRRE-like protein 1 (757 aa).

The first 16 residues, 1–16, serve as a signal peptide directing secretion; the sequence is MLSLLVWILTLSDTFS. At 17–499 the chain is on the extracellular side; it reads QGTQTRFSQE…REVLPVGIIA (483 aa). Ig-like C2-type domains are found at residues 21 to 115, 120 to 216, 223 to 299, 308 to 387, and 392 to 488; these read TRFS…AKLT, PEDT…TSIE, PTVT…TNVS, PRIV…EVPL, and PPII…IQLE. Cys-42 and Cys-100 form a disulfide bridge. Asn-46 and Asn-140 each carry an N-linked (GlcNAc...) asparagine glycan. Intrachain disulfides connect Cys-143/Cys-200 and Cys-244/Cys-287. Asn-297 carries an N-linked (GlcNAc...) asparagine glycan. An intrachain disulfide couples Cys-329 to Cys-371. The Cell attachment site motif lies at 405-407; that stretch reads RGD. The cysteines at positions 413 and 472 are disulfide-linked. N-linked (GlcNAc...) asparagine glycosylation occurs at Asn-471. A helical membrane pass occupies residues 500–520; the sequence is GATIGASILLIFFFIALVFFL. At 521–757 the chain is on the cytoplasmic side; sequence YRRRKGSRKD…RFQQRMQTHV (237 aa). Position 574 is a phosphoserine (Ser-574). Phosphotyrosine; by FYN occurs at positions 605 and 606. A phosphotyrosine mark is found at Tyr-622 and Tyr-625. The disordered stretch occupies residues 649 to 679; that stretch reads QLNTYSRGPASDYGPEPTPPGPAAPAGTDTT. Phosphotyrosine is present on Tyr-724.

It belongs to the immunoglobulin superfamily. As to quaternary structure, interacts with TJP1/ZO-1 and with NPHS2/podocin (via the C-terminus). Interacts with NPHS1/nephrin (via the Ig-like domains); this interaction is dependent on KIRREL1 glycosylation. Homodimer (via the Ig-like domains). Interacts when tyrosine-phosphorylated with GRB2. Post-translationally, phosphorylation probably regulates the interaction with NSH2. Phosphorylated at Tyr-605 and Tyr-606 by FYN, leading to GRB2 binding. N-glycosylated. In terms of tissue distribution, abundantly expressed in kidney. Specifically expressed in podocytes of kidney glomeruli.

It is found in the cell membrane. Functionally, required for proper function of the glomerular filtration barrier. It is involved in the maintenance of a stable podocyte architecture with interdigitating foot processes connected by specialized cell-cell junctions, known as the slit diaphragm. It is a signaling protein that needs the presence of TEC kinases to fully trans-activate the transcription factor AP-1. This Homo sapiens (Human) protein is Kin of IRRE-like protein 1.